The following is a 1484-amino-acid chain: Cystic fibrosis transmembrane conductance regulator (1484 aa).

Over 1–77 the chain is Cytoplasmic; it reads MQRSPLERAN…KLINALRRCF (77 aa). The helical transmembrane segment at 78-98 threads the bilayer; sequence FWRFMFYGLLLYLGEVTKAVQ. An ABC transmembrane type-1 1 domain is found at 81–365; the sequence is FMFYGLLLYL…WAVQMWYDSI (285 aa). The Extracellular segment spans residues 99 to 122; sequence PLLLGRIIASYDPDNAHERSIAYY. A helical transmembrane segment spans residues 123–146; that stretch reads LGIGLCLLFIVRTLLLHPAVFGLH. The Cytoplasmic segment spans residues 147–195; that stretch reads HIGMQMRIALFSLIYKKTLKLSSRVLDKISTGQLVSLLSNNLNKFDEGL. The helical transmembrane segment at 196–216 threads the bilayer; that stretch reads ALAHFVWIAPLQVMLLMGLLW. At 217 to 222 the chain is on the extracellular side; sequence DLLQAS. Residues 223–243 form a helical membrane-spanning segment; sequence AFCGLAVLVVLVLFQAWLGHR. At 244–298 the chain is on the cytoplasmic side; it reads MMKYRDRRAGKINERLVITAEIIENIQSVKAYCWEEAMENMIESLRETELKLTRK. The chain crosses the membrane as a helical span at residues 299–319; the sequence is AAYMRYFNSSAFFFSGFFVVF. Residues 320-339 are Extracellular-facing; that stretch reads LSVLPSMLTKGIVLRKIFTT. The helical transmembrane segment at 340 to 358 threads the bilayer; sequence ISFCIVLRMAVTRQFPWAV. Topologically, residues 359-859 are cytoplasmic; that stretch reads QMWYDSIGAI…YLRYMTIHKK (501 aa). Residues Trp-401, Ser-434, 458–465, and Gln-493 each bind ATP; that span reads GSTGAGKT. The region spanning 423–646 is the ABC transporter 1 domain; that stretch reads SDDKNLIFSN…RPDFSSKLMG (224 aa). Cys-524 is lipidated: S-palmitoyl cysteine. Phosphoserine occurs at positions 549 and 660. Residues 654–832 form a disordered R region region; the sequence is SAERRNSILT…EEINEEDLKE (179 aa). At Ser-670 the chain carries Phosphoserine; by PKA. Ser-686 carries the post-translational modification Phosphoserine. Lys-688 participates in a covalent cross-link: Glycyl lysine isopeptide (Lys-Gly) (interchain with G-Cter in ubiquitin). 7 positions are modified to phosphoserine: Ser-700, Ser-712, Ser-737, Ser-768, Ser-791, Ser-796, and Ser-814. The helical transmembrane segment at 860 to 880 threads the bilayer; the sequence is LIFVLMMCLVIFLIEVAASLV. The region spanning 860–1159 is the ABC transmembrane type-1 2 domain; it reads LIFVLMMCLV…AVNASIDVDS (300 aa). The Extracellular portion of the chain corresponds to 881–922; the sequence is GLCLFKDGASRMNSTSNLNHTSTLDWFAVIVTNTSTYYMFYI. 3 N-linked (GlcNAc...) asparagine glycosylation sites follow: Asn-893, Asn-899, and Asn-913. Residues 923–943 form a discontinuously helical membrane-spanning segment; that stretch reads YVGVADTLLALGFLRGLPLVH. The Cytoplasmic segment spans residues 944–994; it reads SLISVSKILHQKMLHSVLQAPMSTFNTLKTGSILNRFSKDMAILDDLLPLT. Residues 995–1015 form a helical membrane-spanning segment; it reads IFDFIQLLLIVIGAVTVVSAL. The Extracellular portion of the chain corresponds to 1016–1017; it reads QP. A helical transmembrane segment spans residues 1018-1038; that stretch reads YIFLASVPVVIAFVLLRAYFL. The Cytoplasmic portion of the chain corresponds to 1039–1099; it reads RTSQQLKQLE…TANWFLYLST (61 aa). The chain crosses the membrane as a helical span at residues 1100–1120; that stretch reads LRWFQMRIEMVFVIFFILVTF. Residues 1121–1134 lie on the Extracellular side of the membrane; the sequence is ISILTTGDGEGKVG. The chain crosses the membrane as a helical span at residues 1135–1155; the sequence is IVLTLAMNIMGTLQWAVNASI. The Cytoplasmic segment spans residues 1156–1484; the sequence is DVDSLMRSVS…TEEEVQDTRL (329 aa). The region spanning 1212-1445 is the ABC transporter 2 domain; the sequence is MTVQDLTAKY…KSVFKQAISH (234 aa). ATP-binding positions include Tyr-1221 and 1246 to 1253; that span reads GRTGSGKS. Positions 1388–1484 are interaction with GORASP2; that stretch reads KTLKQAFTNC…TEEEVQDTRL (97 aa). Cys-1397 is lipidated: S-palmitoyl cysteine. Residues Ser-1446 and Ser-1460 each carry the phosphoserine modification. A disordered region spans residues 1463–1484; it reads LSRPKITALQEETEEEVQDTRL. Residues 1473 to 1484 are compositionally biased toward acidic residues; the sequence is EETEEEVQDTRL. Residues 1482–1484 carry the PDZ-binding motif; that stretch reads TRL.

Belongs to the ABC transporter superfamily. ABCC family. CFTR transporter (TC 3.A.1.202) subfamily. As to quaternary structure, monomer; does not require oligomerization for channel activity. May form oligomers in the membrane. Interacts with SLC26A3, SLC26A6 and NHERF1. Interacts with SHANK2. Interacts with MYO6. Interacts (via C-terminus) with GOPC (via PDZ domain); this promotes CFTR internalization and thereby decreases channel activity. Interacts with SLC4A7 through NHERF1. Found in a complex with MYO5B and RAB11A. Interacts with ANO1. Interacts with SLC26A8. Interacts with AHCYL1; the interaction increases CFTR activity. Interacts with CSE1L. The core-glycosylated form interacts with GORASP2 (via PDZ GRASP-type 1 domain) in respone to ER stress. Interacts with MARCHF2; the interaction leads to CFTR ubiqtuitination and degradation. Interacts with ADGRG2. Post-translationally, N-glycosylated. In terms of processing, phosphorylated; cAMP treatment promotes phosphorylation and activates the channel. Dephosphorylation decreases the ATPase activity (in vitro). Phosphorylation at PKA sites activates the channel. Phosphorylation at PKC sites enhances the response to phosphorylation by PKA. Phosphorylated by AMPK; this inhibits channel activity. Ubiquitinated, leading to its degradation in the lysosome. Deubiquitination by USP10 in early endosomes enhances its endocytic recycling to the cell membrane. Ubiquitinated by RNF185 during ER stress. Ubiquitinated by MARCHF2.

Its subcellular location is the apical cell membrane. It is found in the early endosome membrane. The protein resides in the cell membrane. It localises to the recycling endosome membrane. The protein localises to the endoplasmic reticulum membrane. Its subcellular location is the nucleus. It carries out the reaction ATP + H2O + closed Cl(-) channel = ADP + phosphate + open Cl(-) channel.. The catalysed reaction is chloride(in) = chloride(out). The enzyme catalyses hydrogencarbonate(in) = hydrogencarbonate(out). It catalyses the reaction ATP + H2O = ADP + phosphate + H(+). Epithelial ion channel that plays an important role in the regulation of epithelial ion and water transport and fluid homeostasis. Mediates the transport of chloride ions across the cell membrane. Possesses an intrinsic ATPase activity and utilizes ATP to gate its channel; the passive flow of anions through the channel is gated by cycles of ATP binding and hydrolysis by the ATP-binding domains. The ion channel is also permeable to HCO(3)(-); selectivity depends on the extracellular chloride concentration. Exerts its function also by modulating the activity of other ion channels and transporters. Contributes to the regulation of the pH and the ion content of the epithelial fluid layer. Modulates the activity of the epithelial sodium channel (ENaC) complex, in part by regulating the cell surface expression of the ENaC complex. May regulate bicarbonate secretion and salvage in epithelial cells by regulating the transporter SLC4A7. Can inhibit the chloride channel activity of ANO1. Plays a role in the chloride and bicarbonate homeostasis during sperm epididymal maturation and capacitation. The chain is Cystic fibrosis transmembrane conductance regulator from Ornithorhynchus anatinus (Duckbill platypus).